The following is a 589-amino-acid chain: Arginine--tRNA ligase (589 aa).

The 'HIGH' region signature appears at 131 to 141; that stretch reads ANPTGPLHVGH.

This sequence belongs to the class-I aminoacyl-tRNA synthetase family. As to quaternary structure, monomer.

It is found in the cytoplasm. The enzyme catalyses tRNA(Arg) + L-arginine + ATP = L-arginyl-tRNA(Arg) + AMP + diphosphate. This chain is Arginine--tRNA ligase, found in Legionella pneumophila subsp. pneumophila (strain Philadelphia 1 / ATCC 33152 / DSM 7513).